The primary structure comprises 1407 residues: DNA-directed RNA polymerase subunit beta' (1407 aa).

Zn(2+)-binding residues include C70, C72, C85, and C88. Residues D458, D460, and D462 each coordinate Mg(2+). Positions 814, 888, 895, and 898 each coordinate Zn(2+).

The protein belongs to the RNA polymerase beta' chain family. In terms of assembly, the RNAP catalytic core consists of 2 alpha, 1 beta, 1 beta' and 1 omega subunit. When a sigma factor is associated with the core the holoenzyme is formed, which can initiate transcription. Requires Mg(2+) as cofactor. It depends on Zn(2+) as a cofactor.

The catalysed reaction is RNA(n) + a ribonucleoside 5'-triphosphate = RNA(n+1) + diphosphate. In terms of biological role, DNA-dependent RNA polymerase catalyzes the transcription of DNA into RNA using the four ribonucleoside triphosphates as substrates. This Leptothrix cholodnii (strain ATCC 51168 / LMG 8142 / SP-6) (Leptothrix discophora (strain SP-6)) protein is DNA-directed RNA polymerase subunit beta'.